The following is a 935-amino-acid chain: Myocardin (935 aa).

Residues 12-27 carry the MEF2C-binding motif; it reads IRRKFRSVLQLRLQQR. RPEL repeat units lie at residues 18–43, 62–87, and 106–131; these read SVLQ…PPLK, DSLR…QAST, and DDLN…PMDS. The segment at 37 to 73 is disordered; it reads GLIPPLKGPTEFHDPRKQLDSAKTEDSLRRKGRNRSD. The segment covering 46–73 has biased composition (basic and acidic residues); it reads TEFHDPRKQLDSAKTEDSLRRKGRNRSD. An HDAC5-binding region spans residues 153–201; it reads FEDDSSRDGLSPDQARSEDPQGSTGSTPDIKSTEAPLDTIQDLTPGSES. A disordered region spans residues 155 to 283; that stretch reads DDSSRDGLSP…SPPPMDSAYA (129 aa). Composition is skewed to polar residues over residues 172–182 and 206–216; these read PQGSTGSTPDI and AASQPGNQSDP. A compositionally biased stretch (basic residues) spans 244–261; sequence NRHKKPKDPKPKVKKLKY. The stretch at 287–322 forms a coiled coil; that stretch reads QQQQLFLQLQILSQQQQQQQQQQQQQQQQQQQQQRF. Residues 337 to 378 form a disordered region; that stretch reads EQMARNPNPSSTPLSNTPLSPVKNSISGQTGVSSLKPGPLPP. Residues 342–357 show a composition bias toward low complexity; it reads NPNPSSTPLSNTPLSP. Positions 358–369 are enriched in polar residues; sequence VKNSISGQTGVS. Residues 380 to 414 enclose the SAP domain; that stretch reads LDDLKVSELRQQLRIRGLPVSGTKTALVDRLRPFQ. 4 positions are modified to phosphoserine; by GSK3-beta: S454, S458, S462, and S466. A disordered region spans residues 498–518; the sequence is ESLLSSLNGGSGPSEPDGLDS. Residues 519-563 adopt a coiled-coil conformation; sequence EKDKMLVEKQKVINQLTWKLRQEQRQVEELRMQLQKQKSSCSDQK. The tract at residues 579-605 is disordered; it reads SCPFAPQQASGKGQGHSSDSPPPACET. Positions 585–597 are enriched in polar residues; it reads QQASGKGQGHSSD. 4 positions are modified to phosphoserine; by GSK3-beta: S624, S628, S632, and S636. The segment at 654–731 is disordered; the sequence is NNHYFLASSS…DAVKQQMTRS (78 aa). Residues 660–691 are compositionally biased toward polar residues; that stretch reads ASSSGAQRENHGVSSPSSSQGCAQMTGLQSSD. Positions 695 to 709 are enriched in low complexity; it reads PTFSIPSPTFSKSSS. Residues 714–935 are required for interaction with and ubiquitination by STUB1; the sequence is ITQPPSYEDA…SPMDLHLQQW (222 aa). A phosphoserine; by MAPK1 and MAPK3 mark is found at S812, S859, and S866. Residue T893 is modified to Phosphothreonine; by MAPK1 and MAPK3.

As to quaternary structure, homodimer. Interacts with MLLT7/FOXO4. Interacts with SRF, its association does not depend on specific DNA sequences for ternary complex formation. Interacts (via C-terminal) with EP300 (via CREB-binding domain). Interacts with HDAC4 and HDAC5. Interacts with MEF2C. Interacts (via C-terminus) with STUB1/CHIP. Interacts with PURB. Ubiquitinated; by STUB1/CHIP at the C-terminus, leading to its degradation by the proteasome. Phosphorylation by GSK3B is required for STUB1/CHIP-mediated ubiquitination. In terms of processing, phosphorylation negatively regulates transcriptional activity. Phosphorylated; by GSK3B. In terms of tissue distribution, expressed in smooth muscle cell-containing tissues. Expressed in the heart. Expressed in the aorta and bladder. Weakly expression in the lung, testis and kidney. Weakly expressed in the stomach. Weakly expressed in the intestine and colon. As to expression, expressed in the heart. Predominantly expressed in cardiac muscle. In terms of tissue distribution, predominantly expressed in smooth muscle cell-rich tissues.

Its subcellular location is the nucleus speckle. Its function is as follows. Smooth muscle cells (SM) and cardiac muscle cells-specific transcriptional factor which uses the canonical single or multiple CArG boxes DNA sequence. Acts as a cofactor of serum response factor (SRF) with the potential to modulate SRF-target genes. Plays a crucial role in cardiogenesis, urinary bladder development, and differentiation of the smooth muscle cell lineage (myogenesis). Positively regulates the transcription of genes involved in vascular smooth muscle contraction. In terms of biological role, positively regulates the activation of smooth muscle cell gene promoter regions. Functionally, positively regulates the activation of smooth muscle cell gene promoter regions. Activation of the MYH6 promoter is enhanced in the presence of MEF2C. The chain is Myocardin (Myocd) from Mus musculus (Mouse).